Here is a 389-residue protein sequence, read N- to C-terminus: Alcohol dehydrogenase-like 5 (389 aa).

The Zn(2+) site is built by Cys-54, Thr-56, His-77, Cys-107, Cys-110, Cys-113, Cys-121, and Cys-186. Positions 56 and 77 each coordinate an alcohol. Thr-56 is an NAD(+) binding site. NAD(+) contacts are provided by residues 211–216 (GLGAVG), Asp-235, Lys-240, 305–307 (LGI), Phe-332, and Arg-382.

It belongs to the zinc-containing alcohol dehydrogenase family. Class-III subfamily. Homodimer. It depends on Zn(2+) as a cofactor.

It is found in the cytoplasm. It catalyses the reaction a primary alcohol + NAD(+) = an aldehyde + NADH + H(+). The catalysed reaction is a secondary alcohol + NAD(+) = a ketone + NADH + H(+). The polypeptide is Alcohol dehydrogenase-like 5 (Arabidopsis thaliana (Mouse-ear cress)).